Here is a 232-residue protein sequence, read N- to C-terminus: Small ribosomal subunit protein uS2 (232 aa).

The protein belongs to the universal ribosomal protein uS2 family.

The protein is Small ribosomal subunit protein uS2 of Carboxydothermus hydrogenoformans (strain ATCC BAA-161 / DSM 6008 / Z-2901).